Consider the following 125-residue polypeptide: Large ribosomal subunit protein mL51 (125 aa).

The transit peptide at 1–29 (MWSVQKLLWGCRSLLPQGCRSFSLGNRDL) directs the protein to the mitochondrion.

Belongs to the mitochondrion-specific ribosomal protein mL51 family. In terms of assembly, component of the mitochondrial ribosome large subunit (39S) which comprises a 16S rRNA and about 50 distinct proteins.

The protein localises to the mitochondrion. This is Large ribosomal subunit protein mL51 (mrpl51) from Xenopus laevis (African clawed frog).